The following is a 47-amino-acid chain: Large ribosomal subunit protein bL34 (47 aa).

This sequence belongs to the bacterial ribosomal protein bL34 family.

In Rhodococcus erythropolis (strain PR4 / NBRC 100887), this protein is Large ribosomal subunit protein bL34.